Here is a 214-residue protein sequence, read N- to C-terminus: Uracil phosphoribosyltransferase (214 aa).

5-phospho-alpha-D-ribose 1-diphosphate is bound by residues Arg107 and 135 to 143; that span reads DPMLATGKT. Uracil is bound by residues Ile198 and 203-205; that span reads GDA. 5-phospho-alpha-D-ribose 1-diphosphate is bound at residue Asp204.

This sequence belongs to the UPRTase family. Mg(2+) serves as cofactor.

The catalysed reaction is UMP + diphosphate = 5-phospho-alpha-D-ribose 1-diphosphate + uracil. It functions in the pathway pyrimidine metabolism; UMP biosynthesis via salvage pathway; UMP from uracil: step 1/1. Its activity is regulated as follows. Allosterically activated by GTP. Its function is as follows. Catalyzes the conversion of uracil and 5-phospho-alpha-D-ribose 1-diphosphate (PRPP) to UMP and diphosphate. This Aeropyrum pernix (strain ATCC 700893 / DSM 11879 / JCM 9820 / NBRC 100138 / K1) protein is Uracil phosphoribosyltransferase.